A 339-amino-acid chain; its full sequence is Transcription initiation factor IIB (339 aa).

The TFIIB-type zinc-finger motif lies at 39–70 (EELICPVCGSKNIIKDYERAEIVCEMCGCVLQ). Cysteine 43, cysteine 46, cysteine 62, and cysteine 65 together coordinate Zn(2+). 2 repeat units span residues 156–239 (SELD…SREL) and 250–331 (DYVP…ELTE).

This sequence belongs to the TFIIB family.

Its function is as follows. Stabilizes TBP binding to an archaeal box-A promoter. Also responsible for recruiting RNA polymerase II to the pre-initiation complex (DNA-TBP-TFIIB). The protein is Transcription initiation factor IIB of Methanococcus maripaludis (strain C6 / ATCC BAA-1332).